An 882-amino-acid polypeptide reads, in one-letter code: DNA polymerase 1 (882 aa).

Residues 1–31 (MTKQLTLFDIPSSKPAKSEQNTQQSQQSAPV) are disordered. A compositionally biased stretch (polar residues) spans 18–29 (SEQNTQQSQQSA).

This sequence belongs to the DNA polymerase type-B family. Interacts with PCNA subunit PCNA2 and weakly with PCNA3.

It carries out the reaction DNA(n) + a 2'-deoxyribonucleoside 5'-triphosphate = DNA(n+1) + diphosphate. DNA synthesis is stimulated by PCNA heterotrimers. This polymerase possesses two enzymatic activities: DNA synthesis (polymerase) and an exonucleolytic activity that degrades single-stranded DNA in the 3'- to 5'-direction. DNA polymerase I, DNA ligase and the flap endonuclease may be constitutively associated with the PCNA heterotrimer forming a scanning complex able to couple DNA synthesis and Okazaki fragment maturation. This chain is DNA polymerase 1 (dpo1), found in Saccharolobus solfataricus (strain ATCC 35092 / DSM 1617 / JCM 11322 / P2) (Sulfolobus solfataricus).